A 310-amino-acid polypeptide reads, in one-letter code: p-hydroxybenzoic acid efflux pump subunit AaeA (310 aa).

Residues 12-32 traverse the membrane as a helical segment; sequence AITVVLVILAFIAIFNAWVYY.

The protein belongs to the membrane fusion protein (MFP) (TC 8.A.1) family.

It is found in the cell inner membrane. In terms of biological role, forms an efflux pump with AaeB. The sequence is that of p-hydroxybenzoic acid efflux pump subunit AaeA from Escherichia coli O139:H28 (strain E24377A / ETEC).